A 193-amino-acid polypeptide reads, in one-letter code: Large ribosomal subunit protein eL19A (193 aa).

The segment at 156-179 is disordered; that stretch reads QEQQDARRARAKAARQRRAKAVEE. A compositionally biased stretch (basic residues) spans 164 to 174; it reads ARAKAARQRRA.

The protein belongs to the eukaryotic ribosomal protein eL19 family. In terms of assembly, component of the large ribosomal subunit (LSU). Mature yeast ribosomes consist of a small (40S) and a large (60S) subunit. The 40S small subunit contains 1 molecule of ribosomal RNA (18S rRNA) and at least 33 different proteins. The large 60S subunit contains 3 rRNA molecules (25S, 5.8S and 5S rRNA) and at least 46 different proteins. eL19 lies in close proximity to the binding site for eukaryotic initiation factor eIF4G.

The protein localises to the cytoplasm. Component of the ribosome, a large ribonucleoprotein complex responsible for the synthesis of proteins in the cell. The small ribosomal subunit (SSU) binds messenger RNAs (mRNAs) and translates the encoded message by selecting cognate aminoacyl-transfer RNA (tRNA) molecules. The large subunit (LSU) contains the ribosomal catalytic site termed the peptidyl transferase center (PTC), which catalyzes the formation of peptide bonds, thereby polymerizing the amino acids delivered by tRNAs into a polypeptide chain. The nascent polypeptides leave the ribosome through a tunnel in the LSU and interact with protein factors that function in enzymatic processing, targeting, and the membrane insertion of nascent chains at the exit of the ribosomal tunnel. eL19 may play a role in the last stages of translation initiation, in particular subunit joining and shedding/releasing factors. The chain is Large ribosomal subunit protein eL19A (rpl1901) from Schizosaccharomyces pombe (strain 972 / ATCC 24843) (Fission yeast).